We begin with the raw amino-acid sequence, 345 residues long: Protein RecA (345 aa).

66–73 (GPESSGKT) is a binding site for ATP.

This sequence belongs to the RecA family.

It localises to the cytoplasm. In terms of biological role, can catalyze the hydrolysis of ATP in the presence of single-stranded DNA, the ATP-dependent uptake of single-stranded DNA by duplex DNA, and the ATP-dependent hybridization of homologous single-stranded DNAs. It interacts with LexA causing its activation and leading to its autocatalytic cleavage. This is Protein RecA from Acidithiobacillus ferrooxidans (strain ATCC 23270 / DSM 14882 / CIP 104768 / NCIMB 8455) (Ferrobacillus ferrooxidans (strain ATCC 23270)).